A 423-amino-acid chain; its full sequence is Acaloleptin A (423 aa).

The first 17 residues, 1-17 (MITKISLILFAVLLVSG), serve as a signal peptide directing secretion. Positions 18-26 (LEEEERWKR) are excised as a propeptide. Disordered regions lie at residues 28–58 (LQPG…NTKT), 108–128 (INNK…DNGN), 180–203 (NVNN…GNTR), and 355–385 (SDDE…TRAD). The segment covering 34 to 43 (NVNNNDQPWQ) has biased composition (polar residues). Residues 180 to 189 (NVNNKDQPWQ) are compositionally biased toward polar residues. Over residues 357 to 366 (DEDEEEEEDQ) the composition is skewed to acidic residues. A compositionally biased stretch (basic and acidic residues) spans 376–385 (RGDDGNTRAD).

Belongs to the coleoptericin family. As to expression, hemolymph (at protein level). Larval fat body.

Its subcellular location is the secreted. Acaloleptins A1-A4 show antibacterial activity against Gram-negative bacteria but not against Gram-positive bacteria. Acaloleptin A5 shows antibacterial activity against Gram-positive bacteria but not against Gram-negative bacteria, and may also have antifungal activity. This chain is Acaloleptin A, found in Acalolepta luxuriosa (Udo longhorn beetle).